Here is a 1626-residue protein sequence, read N- to C-terminus: MAKSGGCGAGAGVGGGNGALTWVTLFDQNNAAKKEESETANKNDSSKKLSVERVYQKKTQLEHILLRPDTYIGSVEPLTQFMWVYDEDVGMNCREVTFVPGLYKIFDEILVNAADNKQRDKNMTCIKVSIDPESNIISIWNNGKGIPVVEHKVEKVYVPALIFGQLLTSSNYDDDEKKVTGGRNGYGAKLCNIFSTKFTVETACKEYKHSFKQTWMNNMMKTSEAKIKHFDGEDYTCITFQPDLSKFKMEKLDKDIVALMTRRAYDLAGSCRGVKVMFNGKKLPVNGFRSYVDLYVKDKLDETGVALKVIHELANERWDVCLTLSEKGFQQISFVNSIATTKGGRHVDYVVDQVVGKLIEVVKKKNKAGVSVKPFQVKNHIWVFINCLIENPTFDSQTKENMTLQPKSFGSKCQLSEKFFKAASNCGIVESILNWVKFKAQTQLNKKCSSVKYSKIKGIPKLDDANDAGGKHSLECTLILTEGDSAKSLAVSGLGVIGRDRYGVFPLRGKILNVREASHKQIMENAEINNIIKIVGLQYKKSYDDAESLKTLRYGKIMIMTDQDQDGSHIKGLLINFIHHNWPSLLKHGFLEEFITPIVKASKNKQELSFYSIPEFDEWKKHIENQKAWKIKYYKGLGTSTAKEAKEYFADMERHRILFRYAGPEDDAAITLAFSKKKIDDRKEWLTNFMEDRRQRRLHGLPEQFLYGTATKHLTYNDFINKELILFSNSDNERSIPSLVDGFKPGQRKVLFTCFKRNDKREVKVAQLAGSVAEMSAYHHGEQALMMTIVNLAQNFVGSNNINLLQPIGQFGTRLHGGKDAASPRYIFTMLSTLARLLFPAVDDNLLKFLYDDNQRVEPEWYIPIIPMVLINGAEGIGTGWACKLPNYDAREIVNNVRRMLDGLDPHPMLPNYKNFKGTIQELGQNQYAVSGEIFVVDRNTVEITELPVRTWTQVYKEQVLEPMLNGTDKTPALISDYKEYHTDTTVKFVVKMTEEKLAQAEAAGLHKVFKLQTTLTCNSMVLFDHMGCLKKYETVQDILKEFFDLRLSYYGLRKEWLVGMLGAESTKLNNQARFILEKIQGKITIENRSKKDLIQMLVQRGYESDPVKAWKEAQEKAAEEDETQNQHDDSSSDSGTPSGPDFNYILNMSLWSLTKEKVEELIKQRDAKGREVNDLKRKSPSDLWKEDLAAFVEELDKVESQEREDVLAGMSGKAIKGKVGKPKVKKLQLEETMPSPYGRRIIPEITAMKADASKKLLKKKKGDLDTAAVKVEFDEEFSGAPVEGAGEEALTPSVPINKGPKPKREKKEPGTRVRKTPTSSGKPSAKKVKKRNPWSDDESKSESDLEETEPVVIPRDSLLRRAAAERPKYTFDFSEEEDDDADDDDDDNNDLEELKVKASPITNDGEDEFVPSDGLDKDEYTFSPGKSKATPEKSLHDKKSQDFGNLFSFPSYSQKSEDDSAKFDSNEEDSASVFSPSFGLKQTDKVPSKTVAAKKGKPSSDTVPKPKRAPKQKKVVEAVNSDSDSEFGIPKKTTTPKGKGRGAKKRKASGSENEGDYNPGRKTSKTTSKKPKKTSFDQDSDVDIFPSDFPTEPPSLPRTGRARKEVKYFAESDEEEDDVDFAMFN.

N-acetylalanine is present on alanine 2. The residue at position 3 (lysine 3) is an N6-acetyllysine. Residues glutamine 28, asparagine 29, lysine 33, and lysine 34 each participate in a glycyl lysine isopeptide (Lys-Gly) (interchain with G-Cter in SUMO2) cross-link. ATP is bound by residues asparagine 112, asparagine 141, and 169 to 171 (SSN). Residues lysine 177 and lysine 178 each participate in a glycyl lysine isopeptide (Lys-Gly) (interchain with G-Cter in SUMO2) cross-link. 182-189 (GRNGYGAK) is an ATP binding site. Glycyl lysine isopeptide (Lys-Gly) (interchain with G-Cter in SUMO2) cross-links involve residues lysine 228 and lysine 299. The interval 363-365 (KKK) is interaction with DNA. Glycyl lysine isopeptide (Lys-Gly) (interchain with G-Cter in SUMO2) cross-links involve residues lysine 367 and lysine 373. Residue 397 to 399 (QTK) participates in ATP binding. Residues lysine 437, lysine 439, and lysine 446 each participate in a glycyl lysine isopeptide (Lys-Gly) (interchain with G-Cter in SUMO2) cross-link. The region spanning 476 to 593 (CTLILTEGDS…SLLKHGFLEE (118 aa)) is the Toprim domain. Positions 482, 562, and 564 each coordinate Mg(2+). Residues lysine 600, lysine 605, lysine 635, lysine 643, lysine 646, lysine 676, and lysine 712 each participate in a glycyl lysine isopeptide (Lys-Gly) (interchain with G-Cter in SUMO2) cross-link. One can recognise a Topo IIA-type catalytic domain in the interval 736–1189 (IPSLVDGFKP…SPSDLWKEDL (454 aa)). Tyrosine 826 (O-(5'-phospho-DNA)-tyrosine intermediate) is an active-site residue. An interaction with DNA region spans residues 1011–1020 (KLQTTLTCNS). The short motif at 1034 to 1044 (ETVQDILKEFF) is the Nuclear export signal element. Lysine 1092 is covalently cross-linked (Glycyl lysine isopeptide (Lys-Gly) (interchain with G-Cter in SUMO2)). Positions 1110–1140 (AWKEAQEKAAEEDETQNQHDDSSSDSGTPSG) are disordered. Residues lysine 1214, lysine 1217, lysine 1226, and lysine 1227 each participate in a glycyl lysine isopeptide (Lys-Gly) (interchain with G-Cter in SUMO2) cross-link. Serine 1236 is subject to Phosphoserine. Glycyl lysine isopeptide (Lys-Gly) (interchain with G-Cter in SUMO2) cross-links involve residues lysine 1250, lysine 1262, and lysine 1271. The disordered stretch occupies residues 1274–1604 (FDEEFSGAPV…PSLPRTGRAR (331 aa)). A Phosphothreonine modification is found at threonine 1292. Residues lysine 1323 and lysine 1327 each participate in a glycyl lysine isopeptide (Lys-Gly) (interchain with G-Cter in SUMO2) cross-link. 2 stretches are compositionally biased toward basic and acidic residues: residues 1334–1344 (PWSDDESKSES) and 1358–1370 (SLLRRAAAERPKY). Serine 1336, serine 1340, serine 1342, serine 1344, and serine 1358 each carry phosphoserine. Tyrosine 1370 is modified (phosphotyrosine). Acidic residues predominate over residues 1374–1392 (FSEEEDDDADDDDDDNNDL). Residue serine 1375 is modified to Phosphoserine. Lysine 1398 is covalently cross-linked (Glycyl lysine isopeptide (Lys-Gly) (interchain with G-Cter in SUMO2)). Serine 1400 is subject to Phosphoserine. Threonine 1403 is modified (phosphothreonine). Serine 1413 bears the Phosphoserine mark. Tyrosine 1421 is subject to Phosphotyrosine. Serine 1424 carries the post-translational modification Phosphoserine. Over residues 1430-1442 (ATPEKSLHDKKSQ) the composition is skewed to basic and acidic residues. A Glycyl lysine isopeptide (Lys-Gly) (interchain with G-Cter in SUMO2) cross-link involves residue lysine 1440. Phosphoserine occurs at positions 1441, 1452, and 1454. Lysine 1456 participates in a covalent cross-link: Glycyl lysine isopeptide (Lys-Gly) (interchain with G-Cter in SUMO2). Basic and acidic residues predominate over residues 1456 to 1466 (KSEDDSAKFDS). Residues serine 1461, serine 1466, serine 1473, and serine 1476 each carry the phosphoserine modification. A Glycyl lysine isopeptide (Lys-Gly) (interchain with G-Cter in SUMO2) cross-link involves residue lysine 1490. The interaction with PLSCR1 stretch occupies residues 1506 to 1512 (KPKRAPK). 3 positions are modified to phosphoserine: serine 1522, serine 1524, and serine 1526. The span at 1539-1549 (GKGRGAKKRKA) shows a compositional bias: basic residues. A phosphoserine mark is found at serine 1550 and serine 1552. Over residues 1563 to 1574 (KTSKTTSKKPKK) the composition is skewed to basic residues. Threonine 1575 is subject to Phosphothreonine. Residues serine 1576 and serine 1581 each carry the phosphoserine modification. A Phosphothreonine modification is found at threonine 1592. Position 1596 is a phosphoserine (serine 1596). Tyrosine 1609 carries the post-translational modification Phosphotyrosine. Residue serine 1613 is modified to Phosphoserine.

The protein belongs to the type II topoisomerase family. Homodimer. Interacts with KIAA1210. Interacts with PLSCR1. Mg(2+) serves as cofactor. The cofactor is Mn(2+). Ca(2+) is required as a cofactor. Post-translationally, (Microbial infection) Deubiquitinated by Epstein-Barr virus BPLF1; leading to stabilized SUMOylated TOP2A trapped in cleavage complexes, which halts the DNA damage response to TOP2A-induced double-strand DNA breaks. SUMOylated. In terms of tissue distribution, expressed in the tonsil, spleen, lymph node, thymus, skin, pancreas, testis, colon, kidney, liver, brain and lung. Also found in breast, colon and lung carcinomas, Hodgkin's disease, large-cell non-Hodgkin's lymphoma, lymphocytic lymphomas and seminomas.

The protein localises to the nucleus. Its subcellular location is the nucleolus. It localises to the nucleoplasm. It carries out the reaction ATP-dependent breakage, passage and rejoining of double-stranded DNA.. Functionally, key decatenating enzyme that alters DNA topology by binding to two double-stranded DNA molecules, generating a double-stranded break in one of the strands, passing the intact strand through the broken strand, and religating the broken strand. Plays a role in B-cell differentiation. The protein is DNA topoisomerase 2-beta (TOP2B) of Homo sapiens (Human).